The sequence spans 284 residues: Ribosomal RNA small subunit methyltransferase A (284 aa).

Asn22, Leu24, Gly49, Glu70, Asp97, and Asn117 together coordinate S-adenosyl-L-methionine.

It belongs to the class I-like SAM-binding methyltransferase superfamily. rRNA adenine N(6)-methyltransferase family. RsmA subfamily.

The protein resides in the cytoplasm. It carries out the reaction adenosine(1518)/adenosine(1519) in 16S rRNA + 4 S-adenosyl-L-methionine = N(6)-dimethyladenosine(1518)/N(6)-dimethyladenosine(1519) in 16S rRNA + 4 S-adenosyl-L-homocysteine + 4 H(+). Its function is as follows. Specifically dimethylates two adjacent adenosines (A1518 and A1519) in the loop of a conserved hairpin near the 3'-end of 16S rRNA in the 30S particle. May play a critical role in biogenesis of 30S subunits. The sequence is that of Ribosomal RNA small subunit methyltransferase A from Desulforapulum autotrophicum (strain ATCC 43914 / DSM 3382 / VKM B-1955 / HRM2) (Desulfobacterium autotrophicum).